The primary structure comprises 340 residues: UDP-3-O-(3-hydroxymyristoyl)glucosamine N-acyltransferase (340 aa).

The active-site Proton acceptor is H239.

It belongs to the transferase hexapeptide repeat family. LpxD subfamily. In terms of assembly, homotrimer.

It carries out the reaction a UDP-3-O-[(3R)-3-hydroxyacyl]-alpha-D-glucosamine + a (3R)-hydroxyacyl-[ACP] = a UDP-2-N,3-O-bis[(3R)-3-hydroxyacyl]-alpha-D-glucosamine + holo-[ACP] + H(+). It catalyses the reaction UDP-3-O-[(3R)-3-hydroxytetradecanoyl]-alpha-D-glucosamine + (3R)-hydroxytetradecanoyl-[ACP] = UDP-2-N,3-O-bis[(3R)-3-hydroxytetradecanoyl]-alpha-D-glucosamine + holo-[ACP] + H(+). The protein operates within glycolipid biosynthesis; lipid IV(A) biosynthesis; lipid IV(A) from (3R)-3-hydroxytetradecanoyl-[acyl-carrier-protein] and UDP-N-acetyl-alpha-D-glucosamine: step 3/6. Catalyzes the N-acylation of UDP-3-O-(hydroxytetradecanoyl)glucosamine using 3-hydroxytetradecanoyl-ACP as the acyl donor. Is involved in the biosynthesis of lipid A, a phosphorylated glycolipid that anchors the lipopolysaccharide to the outer membrane of the cell. The protein is UDP-3-O-(3-hydroxymyristoyl)glucosamine N-acyltransferase of Pectobacterium atrosepticum (strain SCRI 1043 / ATCC BAA-672) (Erwinia carotovora subsp. atroseptica).